Consider the following 351-residue polypeptide: Cell shape-determining protein MreB (351 aa).

ATP is bound by residues 20-22, 169-171, 217-220, and 299-302; these read TAN, GGT, ERIK, and GGAL.

Belongs to the FtsA/MreB family. In terms of assembly, forms polymers.

Its subcellular location is the cytoplasm. Functionally, forms membrane-associated dynamic filaments that are essential for cell shape determination. Acts by regulating cell wall synthesis and cell elongation, and thus cell shape. A feedback loop between cell geometry and MreB localization may maintain elongated cell shape by targeting cell wall growth to regions of negative cell wall curvature. This chain is Cell shape-determining protein MreB, found in Pasteurella multocida (strain Pm70).